Reading from the N-terminus, the 499-residue chain is Pentatricopeptide repeat-containing protein PPR5, chloroplastic (499 aa).

A compositionally biased stretch (low complexity) spans 1–12 (MLACPSTSSPWP). Residues 1 to 28 (MLACPSTSSPWPQRQPPSPCPGGGGGAT) form a disordered region. The N-terminal 45 residues, 1–45 (MLACPSTSSPWPQRQPPSPCPGGGGGATRHVALAARSKRRGAGPA), are a transit peptide targeting the chloroplast. PPR repeat units lie at residues 123–157 (DNGIYSKLISVMGRKGQIRMAMWLFSQMRNSGCKP), 158–193 (DTSVYNSLIGAHLHSRDKTKALAKALGYFEKMKCIE), 198–232 (TIVTYNILLRAFAQAGDTKQVDMLFKDLDESVVSP), 233–267 (DVYTYNGVLDAYGKNGMIKEMESVLVRMKSTQCRP), 268–302 (DVITFNILIDSYGRKQTFDKMEQVFKSLLRSKERP), 303–337 (THPTFNSMITNYGRARLREKAESVVEKMEELGFKP), 338–372 (NYVTQECLIIMYAHCDCVSKARQVFDELVTSQTKV), 373–407 (HLSSLNSMLEAYCMNGLHTEADRLLDTALQQCVVP), and 408–442 (NGSTYKLLYKAYTKANDKLLVQKLLKRMNKQGIVP). The interval 458–499 (DRKPRTSPGINSASKPSTDSAGDSETATSDKPEVSVWHVAAT) is disordered. The segment covering 465-484 (PGINSASKPSTDSAGDSETA) has biased composition (polar residues).

Belongs to the PPR family. P subfamily.

The protein resides in the plastid. It is found in the chloroplast. In terms of biological role, involved in the biogenesis of the plastid translation machinery by promoting the splicing of group II introns in chloroplasts. Stabilizes the chloroplast trnG pre-RNA by directly binding to a group II intron, where it protects an endonuclease-sensitive site and stimulates splicing. Binds specific sites within group II intron trnG pre-RNA. Binds with high affinity to the 5'-UTR of the chloroplastic petA mRNA. The polypeptide is Pentatricopeptide repeat-containing protein PPR5, chloroplastic (Zea mays (Maize)).